The chain runs to 209 residues: Fibroblast growth factor 21 (209 aa).

An N-terminal signal peptide occupies residues 1-28 (MDSDETGFEHSGLWVSVLAGLLLGACQA). The interval 143–209 (PLHLPGNKSP…SQGRSPSYAS (67 aa)) is disordered. A compositionally biased stretch (pro residues) spans 168 to 186 (PGLPPALPEPPGILAPQPP).

The protein belongs to the heparin-binding growth factors family. Interacts (via C-terminus) with KLB; this interaction is direct. Interacts with FGFR4.

It localises to the secreted. In terms of biological role, stimulates glucose uptake in differentiated adipocytes via the induction of glucose transporter SLC2A1/GLUT1 expression (but not SLC2A4/GLUT4 expression). Activity requires the presence of KLB. Regulates systemic glucose homeostasis and insulin sensitivity. This chain is Fibroblast growth factor 21 (FGF21), found in Homo sapiens (Human).